A 133-amino-acid polypeptide reads, in one-letter code: Small ribosomal subunit protein uS8 (133 aa).

It belongs to the universal ribosomal protein uS8 family. As to quaternary structure, part of the 30S ribosomal subunit. Contacts proteins S5 and S12.

Functionally, one of the primary rRNA binding proteins, it binds directly to 16S rRNA central domain where it helps coordinate assembly of the platform of the 30S subunit. The polypeptide is Small ribosomal subunit protein uS8 (Orientia tsutsugamushi (strain Ikeda) (Rickettsia tsutsugamushi)).